The sequence spans 190 residues: Threonylcarbamoyl-AMP synthase (190 aa).

Residues 7–190 (GDAIAAAIDV…ALTGELFRQG (184 aa)) form the YrdC-like domain.

Belongs to the SUA5 family. TsaC subfamily.

The protein localises to the cytoplasm. The enzyme catalyses L-threonine + hydrogencarbonate + ATP = L-threonylcarbamoyladenylate + diphosphate + H2O. Functionally, required for the formation of a threonylcarbamoyl group on adenosine at position 37 (t(6)A37) in tRNAs that read codons beginning with adenine. Catalyzes the conversion of L-threonine, HCO(3)(-)/CO(2) and ATP to give threonylcarbamoyl-AMP (TC-AMP) as the acyladenylate intermediate, with the release of diphosphate. The chain is Threonylcarbamoyl-AMP synthase from Escherichia coli O157:H7.